A 312-amino-acid chain; its full sequence is Glyoxylate/hydroxypyruvate reductase A (312 aa).

R227 is a catalytic residue. The Proton donor role is filled by H275.

It belongs to the D-isomer specific 2-hydroxyacid dehydrogenase family. GhrA subfamily.

The protein resides in the cytoplasm. It catalyses the reaction glycolate + NADP(+) = glyoxylate + NADPH + H(+). The catalysed reaction is (R)-glycerate + NAD(+) = 3-hydroxypyruvate + NADH + H(+). It carries out the reaction (R)-glycerate + NADP(+) = 3-hydroxypyruvate + NADPH + H(+). Catalyzes the NADPH-dependent reduction of glyoxylate and hydroxypyruvate into glycolate and glycerate, respectively. This Klebsiella pneumoniae subsp. pneumoniae (strain ATCC 700721 / MGH 78578) protein is Glyoxylate/hydroxypyruvate reductase A.